Consider the following 540-residue polypeptide: Keratin, type II cytoskeletal 73 (540 aa).

The interval 1 to 131 is head; it reads MSRQFTYKSG…DPEIQKVRAQ (131 aa). Residues 132-167 are coil 1A; it reads EREQIKVLNNKFASFIDKVRFLEQQNQVLETKWELL. In terms of domain architecture, IF rod spans 132 to 445; sequence EREQIKVLNN…KLLEGEECRM (314 aa). Residues 168–186 form a linker 1 region; the sequence is QQLDLNNCKNNLEPILEGY. Residues 187–278 are coil 1B; the sequence is ISNLRKQLET…CLYEGETAQI (92 aa). A linker 12 region spans residues 279 to 302; sequence QSHISDTSIILSMDNNRNLDLDSI. Residues 303-441 form a coil 2 region; sequence IAEVRAQYEE…ATYRKLLEGE (139 aa). Residues 442-540 are tail; the sequence is ECRMSGEYTN…LSSPTKKTMR (99 aa). Residues 502–540 form a disordered region; that stretch reads SGNCSPRGEARTRLGSASEFRDSQGKTLALSSPTKKTMR. Over residues 526–540 the composition is skewed to polar residues; sequence GKTLALSSPTKKTMR.

It belongs to the intermediate filament family. In terms of assembly, heterotetramer of two type I and two type II keratins. Highly expressed in hair follicles from scalp. In hair, it is specifically present in the inner root sheath (IRS) of the hair follicle. Present in the IRS cuticle, but not in Henle or Huxley layers of the IRS. In the IRS cuticle, it is expressed between the lowermost bulb region of the cuticle and the region where Henle cells undergo abrupt terminal differentiation. Detected up to the uppermost cortex region where cuticle cells terminally differentiate (at protein level).

Functionally, has a role in hair formation. Specific component of keratin intermediate filaments in the inner root sheath (IRS) of the hair follicle. In Homo sapiens (Human), this protein is Keratin, type II cytoskeletal 73 (KRT73).